Here is a 393-residue protein sequence, read N- to C-terminus: Phosphoglycerate kinase (393 aa).

Residues 22 to 24 (DFN), Arg-37, 60 to 63 (HLGR), Arg-119, and Arg-152 contribute to the substrate site. ATP-binding positions include Lys-202, Gly-293, Glu-324, and 350–353 (GGDS).

It belongs to the phosphoglycerate kinase family. In terms of assembly, monomer.

It is found in the cytoplasm. The enzyme catalyses (2R)-3-phosphoglycerate + ATP = (2R)-3-phospho-glyceroyl phosphate + ADP. It participates in carbohydrate degradation; glycolysis; pyruvate from D-glyceraldehyde 3-phosphate: step 2/5. In Borreliella afzelii (strain PKo) (Borrelia afzelii), this protein is Phosphoglycerate kinase.